We begin with the raw amino-acid sequence, 284 residues long: Protein-S-isoprenylcysteine O-methyltransferase (284 aa).

Topologically, residues 1 to 16 are cytoplasmic; that stretch reads MAGCAARAPPGSEARL. The helical transmembrane segment at 17 to 33 threads the bilayer; it reads SLATFLLGASVLALPLL. The Lumenal portion of the chain corresponds to 34–41; that stretch reads TRAGLQGR. Residues 42 to 59 traverse the membrane as a helical segment; that stretch reads TGLALYVAGLNALLLLLY. Topologically, residues 60-69 are cytoplasmic; the sequence is RPPRYQIAIR. A helical transmembrane segment spans residues 70–87; sequence ACFLGFVFGCGTLLSFSQ. Over 88 to 92 the chain is Lumenal; sequence SSWSH. The helical transmembrane segment at 93–112 threads the bilayer; it reads FGWYMCSLSLFHYSEYLVTA. Topologically, residues 113–131 are cytoplasmic; that stretch reads VNNPKSLSLDSFLLNHSLE. The chain crosses the membrane as a helical span at residues 132-149; that stretch reads YTVAALSSWLEFTLENIF. Residues 150–154 lie on the Lumenal side of the membrane; the sequence is WPELK. The chain crosses the membrane as a helical span at residues 155-174; sequence QITWLSVTGLLMVVFGECLR. Topologically, residues 175 to 212 are cytoplasmic; the sequence is KAAMFTAGSNFNHVVQNEKSDTHTLVTSGVYAWFRHPS. S-adenosyl-L-methionine is bound by residues Gln-190, 197–200, Tyr-205, and 210–213; these read HTLV and HPSY. Residues 213 to 228 form a helical membrane-spanning segment; sequence YVGWFYWSIGTQVMLC. Position 229 (Asn-229) is a topological domain, lumenal. Residues 230–244 form a helical membrane-spanning segment; it reads PICGVSYALTVWRFF. Residues 245-284 lie on the Cytoplasmic side of the membrane; it reads RDRTEEEEISLIHFFGEEYLEYKKRVPTGLPFIKGVKVDL. Position 247 (Arg-247) interacts with substrate. An S-adenosyl-L-methionine-binding site is contributed by Glu-251.

Belongs to the class VI-like SAM-binding methyltransferase superfamily. Isoprenylcysteine carboxyl methyltransferase family. In terms of tissue distribution, ubiquitously expressed. Expressed at higher levels in the cerebellum and putamen than in other brain regions. Abundant expression seen in the Purkinje cells and pontine neurons.

It localises to the endoplasmic reticulum membrane. It catalyses the reaction [protein]-C-terminal S-[(2E,6E)-farnesyl]-L-cysteine + S-adenosyl-L-methionine = [protein]-C-terminal S-[(2E,6E)-farnesyl]-L-cysteine methyl ester + S-adenosyl-L-homocysteine. With respect to regulation, competitively inhibited by N-acetyl-S-trans,trans-farnesyl-l-cysteine (AFC). Its function is as follows. Catalyzes the post-translational methylation of isoprenylated C-terminal cysteine residues. The sequence is that of Protein-S-isoprenylcysteine O-methyltransferase (ICMT) from Homo sapiens (Human).